Reading from the N-terminus, the 157-residue chain is Protein Smg (157 aa).

Belongs to the Smg family.

This chain is Protein Smg, found in Escherichia coli O6:H1 (strain CFT073 / ATCC 700928 / UPEC).